Reading from the N-terminus, the 638-residue chain is MGKVVGIDLGTTNSVVAVLEGGQPTVIANAEGSRTTPSVVAFTKNHDRLVGQLARRQAVLNPENTFYSVKRFIGRKYDEITDEAKQVAYRVVRDGSNVKLHSTNEDKDFAPEEISALVLRKLVDDASKYLGEKITQAVITVPAYFNDSQRQATKDAGRIAGIEVLRIINEPTAAALAYGLDKKANETILVFDLGGGTFDVSILEVGDGVFEVKSTSGDTHLGGDDFDRRIVDYLADEFKKLEGVDLRTDRQALQRLTEAAEKAKIELSGVTQTQINLPFITAGADGAKHLDMSLTRAKFESLCADLLRRVEKPVEQALRDAKLSKENIDEVVLVGGSTRIPAVQELVKRIIGKDPNQSVNPDEVVAVGAAIQAGVLSGEVRDVVLLDVTPLSLGVETLGGVATPIIPRNTTIPTRKSETFSTAADGQTSVEIHVIQGERSMAGDNKSLGRFRLDGIPPAPRGVPQVEVTFDIDANGILSVTAKDKASGKAQTISITGASTLSKDDVAKMVNEAESFAGEDKKRREAVDLKNEADSLAYQAERQLTEFGDKVDSSDKSKIEGLIKDLREALSREDMDKVASLKADLQQAVYDLSSKLYQQSAPSGAAAGPDEGAPSGSGGTSGTRGGDDVIDAEFTETK.

Thr197 carries the phosphothreonine; by autocatalysis modification. The tract at residues 598–638 (QQSAPSGAAAGPDEGAPSGSGGTSGTRGGDDVIDAEFTETK) is disordered. Residues 615–624 (SGSGGTSGTR) show a composition bias toward gly residues. Residues 628 to 638 (DVIDAEFTETK) are compositionally biased toward acidic residues.

The protein belongs to the heat shock protein 70 family.

Its function is as follows. Acts as a chaperone. The sequence is that of Chaperone protein DnaK from Gloeobacter violaceus (strain ATCC 29082 / PCC 7421).